We begin with the raw amino-acid sequence, 334 residues long: Thiamine-binding periplasmic protein (334 aa).

The first 23 residues, 1–23, serve as a signal peptide directing secretion; the sequence is MRLLSLLTFSLFAVIGLAPAAQA. Residues 64-65, 166-167, tryptophan 202, and 220-223 each bind thiamine; these read DG, AT, and YTTS.

This sequence belongs to the bacterial solute-binding protein 1 family. The complex is composed of two ATP-binding proteins (ThiQ), two transmembrane proteins (ThiP) and a solute-binding protein (ThiB).

It localises to the periplasm. Functionally, part of the ABC transporter complex ThiBPQ involved in thiamine import. The polypeptide is Thiamine-binding periplasmic protein (thiB) (Brucella suis biovar 1 (strain 1330)).